We begin with the raw amino-acid sequence, 327 residues long: Methionyl-tRNA formyltransferase (327 aa).

Residue 121-124 (SLLP) coordinates (6S)-5,6,7,8-tetrahydrofolate.

This sequence belongs to the Fmt family.

The enzyme catalyses L-methionyl-tRNA(fMet) + (6R)-10-formyltetrahydrofolate = N-formyl-L-methionyl-tRNA(fMet) + (6S)-5,6,7,8-tetrahydrofolate + H(+). Functionally, attaches a formyl group to the free amino group of methionyl-tRNA(fMet). The formyl group appears to play a dual role in the initiator identity of N-formylmethionyl-tRNA by promoting its recognition by IF2 and preventing the misappropriation of this tRNA by the elongation apparatus. The polypeptide is Methionyl-tRNA formyltransferase (Burkholderia multivorans (strain ATCC 17616 / 249)).